Here is a 240-residue protein sequence, read N- to C-terminus: Cell division control protein 14 (240 aa).

Interacts with sid1.

It is found in the cytoplasm. The protein resides in the cytoskeleton. It localises to the microtubule organizing center. Its subcellular location is the spindle pole body. Has a role in the septation initiation network (SIN) required for cytokinesis. This chain is Cell division control protein 14 (cdc14), found in Schizosaccharomyces pombe (strain 972 / ATCC 24843) (Fission yeast).